We begin with the raw amino-acid sequence, 1456 residues long: Macrophage mannose receptor 1 (1456 aa).

An N-terminal signal peptide occupies residues 1-18 (MRLPLLLVFASVIPGAVL). The Extracellular segment spans residues 19 to 1389 (LLDTRQFLIY…DPSKPSSNVA (1371 aa)). In terms of domain architecture, Ricin B-type lectin spans 22 to 142 (TRQFLIYNED…SGLWSRWKIY (121 aa)). Disulfide bonds link Cys35/Cys49 and Cys74/Cys91. A glycan (N-linked (GlcNAc...) asparagine) is linked at Asn104. In terms of domain architecture, Fibronectin type-II spans 163–211 (ANGATCAFPFKFENKWYADCTSAGRSDGWLWCGTTTDYDTDKLFGYCPL). 4 disulfide bridges follow: Cys168-Cys194, Cys182-Cys209, Cys247-Cys340, and Cys316-Cys332. One can recognise a C-type lectin 1 domain in the interval 225–341 (LTSVSYQINS…CVQKLGYICK (117 aa)). The N-linked (GlcNAc...) asparagine glycan is linked to Asn344. 4 C-type lectin domains span residues 369–487 (YAGH…YICK), 511–626 (HHFY…FVCK), 655–778 (RTSL…WICQ), and 807–923 (YKDY…FICQ). Disulfide bonds link Cys391–Cys486 and Cys463–Cys478. N-linked (GlcNAc...) asparagine glycosylation occurs at Asn529. Intrachain disulfides connect Cys532–Cys625, Cys600–Cys617, Cys646–Cys659, Cys680–Cys777, Cys753–Cys769, Cys828–Cys922, and Cys899–Cys914. Asn926 and Asn930 each carry an N-linked (GlcNAc...) asparagine glycan. C-type lectin domains lie at 952–1080 (YSNK…YICQ), 1102–1213 (YGKS…FLCK), and 1241–1356 (FHGH…YICK). 6 disulfides stabilise this stretch: Cys977/Cys1079, Cys1052/Cys1071, Cys1123/Cys1212, Cys1190/Cys1204, Cys1263/Cys1355, and Cys1332/Cys1347. N-linked (GlcNAc...) asparagine glycosylation occurs at Asn1160. An N-linked (GlcNAc...) asparagine glycan is attached at Asn1205. A helical membrane pass occupies residues 1390–1410 (GVVIIVILLILTGAGLAAYFF). The Cytoplasmic segment spans residues 1411-1456 (YKKRRVHLPQEGAFENTLYFNSQSSPGTSDMKDLVGNIEQNEHSVI).

In terms of assembly, (Microbial infection) Interacts with Dengue virus. As to quaternary structure, (Microbial infection) May act as a receptor for hepatitis B virus, enabling uptake of the virus in hepatic dendritic cells.

It localises to the endosome membrane. It is found in the cell membrane. Its function is as follows. Mediates the endocytosis of glycoproteins by macrophages. Binds both sulfated and non-sulfated polysaccharide chains. Functionally, (Microbial infection) Acts as a phagocytic receptor for bacteria, fungi and other pathogens. In terms of biological role, (Microbial infection) Acts as a receptor for Dengue virus envelope protein E. (Microbial infection) Interacts with Hepatitis B virus envelope protein. In Homo sapiens (Human), this protein is Macrophage mannose receptor 1 (MRC1).